The primary structure comprises 213 residues: Imidazole glycerol phosphate synthase subunit HisH (213 aa).

Residues 6-213 (LVTVIDYGMG…FKNFLNWNGQ (208 aa)) enclose the Glutamine amidotransferase type-1 domain. The active-site Nucleophile is the cysteine 86. Catalysis depends on residues histidine 192 and glutamate 194.

In terms of assembly, heterodimer of HisH and HisF.

It localises to the cytoplasm. The enzyme catalyses 5-[(5-phospho-1-deoxy-D-ribulos-1-ylimino)methylamino]-1-(5-phospho-beta-D-ribosyl)imidazole-4-carboxamide + L-glutamine = D-erythro-1-(imidazol-4-yl)glycerol 3-phosphate + 5-amino-1-(5-phospho-beta-D-ribosyl)imidazole-4-carboxamide + L-glutamate + H(+). It catalyses the reaction L-glutamine + H2O = L-glutamate + NH4(+). It participates in amino-acid biosynthesis; L-histidine biosynthesis; L-histidine from 5-phospho-alpha-D-ribose 1-diphosphate: step 5/9. Its function is as follows. IGPS catalyzes the conversion of PRFAR and glutamine to IGP, AICAR and glutamate. The HisH subunit catalyzes the hydrolysis of glutamine to glutamate and ammonia as part of the synthesis of IGP and AICAR. The resulting ammonia molecule is channeled to the active site of HisF. The sequence is that of Imidazole glycerol phosphate synthase subunit HisH from Hydrogenovibrio crunogenus (strain DSM 25203 / XCL-2) (Thiomicrospira crunogena).